Consider the following 526-residue polypeptide: Vang-like protein 2 (526 aa).

A disordered region spans residues 1 to 95 (MDNESQYSGY…NEDLTRASKE (95 aa)). Residues 1–109 (MDNESQYSGY…SPLECRRFAG (109 aa)) are Cytoplasmic-facing. The span at 15 to 33 (SHSRSSRKHRDRRDRHRSK) shows a compositional bias: basic residues. 2 stretches are compositionally biased toward basic and acidic residues: residues 34 to 43 (SRDSSSRGDK) and 58 to 68 (ESTRGDDRDDN). Positions 70–83 (GETTTVVTGTSEHS) are enriched in low complexity. Residues 84 to 95 (VSNEDLTRASKE) are compositionally biased toward basic and acidic residues. The chain crosses the membrane as a helical span at residues 110–130 (PIVSGVLGLFALLTPLAFLLL). The Extracellular segment spans residues 131–148 (PQLLWRDSLEPCGTPCEG). A helical membrane pass occupies residues 149-169 (LYVSLAFKLLVLLISSWALFL). Residues 170-178 (RPSRSTLPR) lie on the Cytoplasmic side of the membrane. A helical transmembrane segment spans residues 179–199 (FFVFRCLLMALVFLFVASYWL). The Extracellular portion of the chain corresponds to 200 to 215 (FYGVRVLEPRERDYRG). Residues 216-236 (IVGYAVSLVDALLFIQYLALV) form a helical membrane-spanning segment. At 237 to 526 (LLEVRHLRPA…VMRLQSETSV (290 aa)) the chain is on the cytoplasmic side. The short motif at 523–526 (ETSV) is the PDZ-binding element.

This sequence belongs to the Vang family. Interacts with the PDZ domain of dvl2/dsh. In terms of tissue distribution, ubiquitously expressed at the 4-cell stage. In early somitogenesis, becomes more abundant in anterior neural tissue where expression is seen in the neural tube but not in the notochord.

It localises to the cell membrane. Functionally, plays a role in non-canonical Wnt/planar cell polarity (PCP) signaling to regulate convergent extension cell movements during gastrulation. Acts together with scrib and prickle1 and localizes prickle1 and dvl2/dsh to the plasma membrane. Has an overlapping role with kny during both convergent extension and eye development. In the eye, involved in establishing proper alignment of the anterior neural plate and midline cells expressing shha and shhb/twhh. Has indirect effects on a number of other developmental processes including notochord shape formation, neural progenitor cell morphogenesis, segregation of somites and adaxial cell development. Together with prickle1, required for the posterior (caudal) movement of branchiomotor neurons in the hindbrain independently of, and a few hours after, convergent extension. May be required for cell surface localization of fzd3 and fzd6 in the inner ear. This Danio rerio (Zebrafish) protein is Vang-like protein 2.